A 106-amino-acid polypeptide reads, in one-letter code: ATP-dependent Clp protease adapter protein ClpS (106 aa).

The protein belongs to the ClpS family. In terms of assembly, binds to the N-terminal domain of the chaperone ClpA.

Involved in the modulation of the specificity of the ClpAP-mediated ATP-dependent protein degradation. The sequence is that of ATP-dependent Clp protease adapter protein ClpS from Citrobacter koseri (strain ATCC BAA-895 / CDC 4225-83 / SGSC4696).